The chain runs to 282 residues: Biotin synthase (282 aa).

The Radical SAM core domain occupies 1-228 (MQEIFLCSIS…NARLMVAGGR (228 aa)). Positions 17, 21, and 24 each coordinate [4Fe-4S] cluster. [2Fe-2S] cluster-binding residues include Cys-61, Cys-96, Cys-154, and Arg-221.

The protein belongs to the radical SAM superfamily. Biotin synthase family. As to quaternary structure, homodimer. It depends on [4Fe-4S] cluster as a cofactor. [2Fe-2S] cluster is required as a cofactor.

The catalysed reaction is (4R,5S)-dethiobiotin + (sulfur carrier)-SH + 2 reduced [2Fe-2S]-[ferredoxin] + 2 S-adenosyl-L-methionine = (sulfur carrier)-H + biotin + 2 5'-deoxyadenosine + 2 L-methionine + 2 oxidized [2Fe-2S]-[ferredoxin]. Its pathway is cofactor biosynthesis; biotin biosynthesis; biotin from 7,8-diaminononanoate: step 2/2. Catalyzes the conversion of dethiobiotin (DTB) to biotin by the insertion of a sulfur atom into dethiobiotin via a radical-based mechanism. The chain is Biotin synthase from Helicobacter pylori (strain ATCC 700392 / 26695) (Campylobacter pylori).